The chain runs to 351 residues: Cytosolic sulfotransferase 11 (351 aa).

3'-phosphoadenylyl sulfate is bound at residue 98 to 103 (KGGTTW). His-163 (proton acceptor) is an active-site residue. Residues Arg-184, Ser-192, Tyr-250, and 316–318 (RKG) contribute to the 3'-phosphoadenylyl sulfate site.

It belongs to the sulfotransferase 1 family.

It is found in the cytoplasm. Functionally, sulfotransferase that utilizes 3'-phospho-5'-adenylyl sulfate (PAPS) as sulfonate donor. In Arabidopsis thaliana (Mouse-ear cress), this protein is Cytosolic sulfotransferase 11 (SOT11).